Reading from the N-terminus, the 332-residue chain is Cysteine and histidine-rich domain-containing protein 1 (332 aa).

N-acetylalanine is present on A2. The tract at residues 2–77 (ALLCYNRGCG…KPPESVKPEV (76 aa)) is interaction with PPP5C. Residues C5, C10, C24, H27, C42, and C43 each contribute to the Zn(2+) site. CHORD domains follow at residues 5-64 (CYNR…KGRH) and 157-216 (CKNG…KGKH). T47 is modified (phosphothreonine). S51 bears the Phosphoserine mark. Positions 59, 64, 157, 162, 176, 179, 194, 195, 211, and 216 each coordinate Zn(2+). The segment at 62 to 81 (GRHNSEKPPESVKPEVKTTE) is disordered. Residues 64–81 (HNSEKPPESVKPEVKTTE) are compositionally biased toward basic and acidic residues. The interval 65–316 (NSEKPPESVK…AEPMQWASLE (252 aa)) is interaction with HSP90AA1 and HSP90AB1. The 90-residue stretch at 227–316 (VVPCRHDWHQ…AEPMQWASLE (90 aa)) folds into the CS domain.

As to quaternary structure, interacts with HSP90AA1, HSP90AB1, PPP5C, ROCK1 and ROCK2.

Its function is as follows. Regulates centrosome duplication, probably by inhibiting the kinase activity of ROCK2. Proposed to act as co-chaperone for HSP90. May play a role in the regulation of NOD1 via a HSP90 chaperone complex. In vitro, has intrinsic chaperone activity. This function may be achieved by inhibiting association of ROCK2 with NPM1. Plays a role in ensuring the localization of the tyrosine kinase receptor EGFR to the plasma membrane, and thus ensures the subsequent regulation of EGFR activity and EGF-induced actin cytoskeleton remodeling. Involved in stress response. Prevents tumorigenesis. The polypeptide is Cysteine and histidine-rich domain-containing protein 1 (CHORDC1) (Pongo abelii (Sumatran orangutan)).